A 507-amino-acid polypeptide reads, in one-letter code: Dihydrolipoyl dehydrogenase 2, mitochondrial (507 aa).

The N-terminal 36 residues, 1–36, are a transit peptide targeting the mitochondrion; the sequence is MAMASLARRKAYFLTRNISNSPTDAFRFSFSLTRGF. Residues 73 to 82, K91, G155, and 184 to 186 each bind FAD; these read EKRGALGGTC and TGS. An intrachain disulfide couples C82 to C87. NAD(+)-binding positions include 221-228, E244, V278, and G313; that span reads GAGYIGLE. Residues D354 and 360–363 contribute to the FAD site; that span reads MLAH. H486 acts as the Proton acceptor in catalysis.

The protein belongs to the class-I pyridine nucleotide-disulfide oxidoreductase family. Homodimer. Part of both the glycine cleavage system composed of four proteins: P, T, L and H and of the pyruvate dehydrogenase complex containing multiple copies of three enzymatic components: pyruvate dehydrogenase (E1), dihydrolipoamide acetyltransferase (E2) and lipoamide dehydrogenase (E3). Requires FAD as cofactor. In terms of processing, S-nytrosylated at unknown positions. As to expression, preferentially expressed in roots, flowers and siliques and at a lower level in stems and leaves.

It localises to the mitochondrion matrix. The catalysed reaction is N(6)-[(R)-dihydrolipoyl]-L-lysyl-[protein] + NAD(+) = N(6)-[(R)-lipoyl]-L-lysyl-[protein] + NADH + H(+). Functionally, lipoamide dehydrogenase is a component of the glycine decarboxylase (GDC) or glycine cleavage system as well as of the alpha-ketoacid dehydrogenase complexes. LPD1 is probably the protein most often associated with the glycine decarboxylase complex while LPD2 is probably incorporated into alpha-ketoacid dehydrogenase complexes. The sequence is that of Dihydrolipoyl dehydrogenase 2, mitochondrial (LPD2) from Arabidopsis thaliana (Mouse-ear cress).